The following is a 560-amino-acid chain: Leucine-rich repeat and IQ domain-containing protein 4 (560 aa).

The tract at residues 1–20 (MSKDIKSVEHSPKIHQRNDP) is disordered. 20 LRR repeats span residues 23–47 (VNDRTFFIDASNQSLTAIPLEIFTF), 48–70 (TELEEVHLENNQIEEIPQEIQRL), 72–95 (NIRVLYLDKNNLRSLCPALGLLSS), 97–116 (ESLDLSYNPIFSSSLVVVSF), 117–140 (LHALRELRLYQTDLKEIPVVIFKN), 141–164 (LHHLELLGLTGNHLKCLPKEIVNQ), 166–187 (KLREIYLKRNQFEVFPQELCVL), 188–210 (YTLEIIDLDENKIGAIPEEIGHL), 212–233 (GLQKFYMASNNLPVLPASLCQC), 234–256 (SQLSVLDLSHNLLHSIPKSFAEL), 258–281 (KMTEIGLSGNRLEKVPRLICRWTS), 283–301 (HLLYLGNTGLHRLRGSFRC), 302–325 (LVNLRFLDLSQNHLHHCPLQICAL), 326–348 (KNLEVLGLDDNKIGQLPSELGSL), 350–371 (KLKILGLTGNEFLSFPEEVLSL), 374–397 (LEKLYIGQDQGFKLTYVPEHIRKL), 398–422 (QSLKELYIENNHLEYLPVSLGSMPN), 424–443 (EVLDCRHNLLKQLPDAICQA), 444–466 (QALKELRLEDNLLTHLPENLDSL), and 468–489 (NLKVLTLMDNPMEEPPKEVCAE). The IQ domain occupies 504-533 (RNIMATKIQAWWRGTMVQRGFGKFGELLKP). The tract at residues 529 to 560 (ELLKPQKKGKTSPKDKKGKKDVKGKPGKGKKK) is disordered. Residues 533–560 (PQKKGKTSPKDKKGKKDVKGKPGKGKKK) show a composition bias toward basic residues.

In Homo sapiens (Human), this protein is Leucine-rich repeat and IQ domain-containing protein 4 (LRRIQ4).